Reading from the N-terminus, the 344-residue chain is Prickle-like protein 4 (344 aa).

In terms of domain architecture, PET spans 1-81 (MSPQGPAVLS…ARLVLPKLEG (81 aa)). 2 consecutive LIM zinc-binding domains span residues 82 to 147 (HTCE…LLRP) and 148 to 207 (RCPA…RYSD). Positions 253 to 344 (GSSLQTQRGL…NASKTHCTMC (92 aa)) are disordered. Polar residues predominate over residues 257–271 (QTQRGLPGSSPQQEN). Positions 272 to 296 (RPGDKAEAPKGQEQCRLETIRDPKD) are enriched in basic and acidic residues. The segment covering 322 to 344 (SWKTPGSLQAEDSNASKTHCTMC) has biased composition (polar residues).

The protein belongs to the prickle / espinas / testin family. As to expression, expressed in a broad range of normal tissues as well as in hepatocellular carcinoma, breast cancer and prostate cancer tissues.

This is Prickle-like protein 4 (PRICKLE4) from Homo sapiens (Human).